Here is a 108-residue protein sequence, read N- to C-terminus: uncharacterized protein (108 aa).

2 consecutive transmembrane segments (helical) span residues 5 to 27 (TVYG…QLEI) and 83 to 105 (IFLM…LNIF).

It localises to the membrane. This is an uncharacterized protein from Schizosaccharomyces pombe (strain 972 / ATCC 24843) (Fission yeast).